We begin with the raw amino-acid sequence, 270 residues long: Glutamate racemase (270 aa).

Substrate contacts are provided by residues 10 to 11 and 42 to 43; these read DS and YG. The Proton donor/acceptor role is filled by C74. Residue 75 to 76 coordinates substrate; the sequence is NT. C189 (proton donor/acceptor) is an active-site residue. 190–191 provides a ligand contact to substrate; that stretch reads TH.

This sequence belongs to the aspartate/glutamate racemases family.

The enzyme catalyses L-glutamate = D-glutamate. It functions in the pathway cell wall biogenesis; peptidoglycan biosynthesis. In terms of biological role, provides the (R)-glutamate required for cell wall biosynthesis. The polypeptide is Glutamate racemase (Bartonella henselae (strain ATCC 49882 / DSM 28221 / CCUG 30454 / Houston 1) (Rochalimaea henselae)).